The chain runs to 626 residues: DNA mismatch repair protein MutL (626 aa).

The protein belongs to the DNA mismatch repair MutL/HexB family.

This protein is involved in the repair of mismatches in DNA. It is required for dam-dependent methyl-directed DNA mismatch repair. May act as a 'molecular matchmaker', a protein that promotes the formation of a stable complex between two or more DNA-binding proteins in an ATP-dependent manner without itself being part of a final effector complex. This is DNA mismatch repair protein MutL from Pelodictyon phaeoclathratiforme (strain DSM 5477 / BU-1).